The following is a 633-amino-acid chain: DEAD-box ATP-dependent RNA helicase 27 (633 aa).

Basic and acidic residues predominate over residues 1 to 17; sequence MANLDMEQHSSENEEIK. The disordered stretch occupies residues 1 to 147; that stretch reads MANLDMEQHS…DKEEEKKLEE (147 aa). A coiled-coil region spans residues 2–34; the sequence is ANLDMEQHSSENEEIKKKKHKKRARDEAKKLKQ. Acidic residues-rich tracts occupy residues 37 to 47 and 74 to 83; these read MEEEPDHEDGD and DDGEDEAVAE. Basic residues predominate over residues 88 to 97; it reads KKKKKNKKLQ. Acidic residues-rich tracts occupy residues 103–114 and 131–140; these read NDEEDEVIAEEE and SEEEEVEDKE. Positions 117–153 form a coiled coil; sequence KKKKKKQRKDTEAKSEEEEVEDKEEEKKLEETSIMTN. The short motif at 154 to 182 is the Q motif element; the sequence is KTFESLSLSDNTYKSIKEMGFARMTQIQA. One can recognise a Helicase ATP-binding domain in the interval 185–360; the sequence is IPPLMMGEDV…RVSLTSPVYI (176 aa). ATP is bound at residue 198–205; the sequence is ARTGSGKT. Positions 308–311 match the DEAD box motif; it reads DEAD. A Helicase C-terminal domain is found at 386-534; it reads RLLFLLTFLK…EHEFEEKKLL (149 aa). Residues 608–633 form a disordered region; the sequence is KREPVNKFKRGRGGGRPGGKSKFERY.

The protein belongs to the DEAD box helicase family. DDX18/HAS1 subfamily.

The catalysed reaction is ATP + H2O = ADP + phosphate + H(+). This is DEAD-box ATP-dependent RNA helicase 27 (RH27) from Arabidopsis thaliana (Mouse-ear cress).